The primary structure comprises 150 residues: Avidin-related protein 7 (150 aa).

The N-terminal stretch at 1–24 (MVHATSPLLLLLLLSLALVAPGLS) is a signal peptide. Residues 26–147 (RKCSLTGEWD…GYNNFTRQRT (122 aa)) enclose the Avidin-like domain. Cys-28 and Cys-105 are joined by a disulfide. Positions 36 and 40 each coordinate biotin. N-linked (GlcNAc...) asparagine glycosylation is found at Asn-41 and Asn-54. The biotin site is built by Tyr-57, Thr-59, and Asp-63. Asn-93 carries an N-linked (GlcNAc...) asparagine glycan. Positions 95, 99, and 140 each coordinate biotin. Asn-141 is a glycosylation site (N-linked (GlcNAc...) asparagine).

It belongs to the avidin/streptavidin family. As to quaternary structure, homotetramer. Post-translationally, glycosylated.

The protein resides in the secreted. Functionally, forms a strong non-covalent specific complex with biotin. In Gallus gallus (Chicken), this protein is Avidin-related protein 7 (AVR7).